The sequence spans 236 residues: Methylosome subunit pICln (236 aa).

The interval 1-20 (MSFLKSFPPPGPTEGLRHQQ) is disordered. Ser2 bears the N-acetylserine mark. Phosphoserine occurs at positions 101, 143, 192, 194, 197, and 209. Thr222 carries the post-translational modification Phosphothreonine.

The protein belongs to the pICln (TC 1.A.47) family. In terms of assembly, component of the methylosome, a 20S complex containing at least PRMT5/SKB1, WDR77/MEP50 and CLNS1A/pICln. May mediate SNRPD1 and SNRPD3 methylation. Forms a 6S pICln-Sm complex composed of CLNS1A/pICln, SNRPD1, SNRPD2, SNRPE, SNRPF and SNRPG; ring-like structure where CLNS1A/pICln mimics additional Sm proteins and which is unable to assemble into the core snRNP. Interacts with LSM10 and LSM11. As to expression, widely distributed but expressed more abundantly in nonpigmented ciliary epithelial cells than in pigmented ones.

It is found in the cytoplasm. It localises to the cytosol. The protein resides in the nucleus. The protein localises to the cytoskeleton. In terms of biological role, involved in both the assembly of spliceosomal snRNPs and the methylation of Sm proteins. Chaperone that regulates the assembly of spliceosomal U1, U2, U4 and U5 small nuclear ribonucleoproteins (snRNPs), the building blocks of the spliceosome, and thereby plays an important role in the splicing of cellular pre-mRNAs. Most spliceosomal snRNPs contain a common set of Sm proteins SNRPB, SNRPD1, SNRPD2, SNRPD3, SNRPE, SNRPF and SNRPG that assemble in a heptameric protein ring on the Sm site of the small nuclear RNA to form the core snRNP (Sm core). In the cytosol, the Sm proteins SNRPD1, SNRPD2, SNRPE, SNRPF and SNRPG are trapped in an inactive 6S pICln-Sm complex by the chaperone CLNS1A that controls the assembly of the core snRNP. Dissociation by the SMN complex of CLNS1A from the trapped Sm proteins and their transfer to an SMN-Sm complex triggers the assembly of core snRNPs and their transport to the nucleus. The protein is Methylosome subunit pICln (CLNS1A) of Oryctolagus cuniculus (Rabbit).